We begin with the raw amino-acid sequence, 198 residues long: Recombination protein RecR (198 aa).

The C4-type zinc finger occupies 57 to 72; that stretch reads CDKCNTFTEAQICEVC. In terms of domain architecture, Toprim spans 80 to 175; it reads TLLCVVETPA…AVTRLARGVP (96 aa).

Belongs to the RecR family.

In terms of biological role, may play a role in DNA repair. It seems to be involved in an RecBC-independent recombinational process of DNA repair. It may act with RecF and RecO. This is Recombination protein RecR from Burkholderia multivorans (strain ATCC 17616 / 249).